A 578-amino-acid polypeptide reads, in one-letter code: L-2,3-diaminopropanoate--citrate ligase (578 aa).

The protein belongs to the IucA/IucC family. Forms a mixture of monomer and dimer in solution.

It catalyses the reaction (S)-2,3-diaminopropanoate + citrate + ATP = 2-[(L-alanin-3-ylcarbamoyl)methyl]-2-hydroxybutanedioate + AMP + diphosphate. The protein operates within siderophore biosynthesis. In terms of biological role, catalyzes the synthesis of citryl-L-2,3-diaminopropionic acid from L-2,3-diaminopropionic acid (L-Dap) and citrate, the first step in staphyloferrin B biosynthesis. The chain is L-2,3-diaminopropanoate--citrate ligase from Staphylococcus aureus (strain NCTC 8325 / PS 47).